An 842-amino-acid chain; its full sequence is Cation/H(+) antiporter 20 (842 aa).

Transmembrane regions (helical) follow at residues 26-46 (FPLL…LAVL), 55-75 (VIAE…RNMA), 86-106 (MPIL…LVGL), 122-142 (GIAV…AFVI), 155-175 (YAEF…PVLA), 193-213 (MAAA…AVAL), 228-248 (LVSL…LVVI), 283-303 (FATD…GLTI), 320-340 (FVSG…TDVA), 353-373 (LVVV…AVMV), 380-400 (ALTL…VLNI), and 413-433 (AILV…VMAI). Over residues 585 to 595 (DHGHSHHHQDG) the composition is skewed to basic and acidic residues. The interval 585–605 (DHGHSHHHQDGGGDGNVPENV) is disordered.

The protein belongs to the monovalent cation:proton antiporter 2 (CPA2) transporter (TC 2.A.37) family. CHX (TC 2.A.37.4) subfamily. Expressed in leaves and stems. Preferentially expressed in guards cells.

It localises to the endomembrane system. In terms of biological role, operates as a K(+)/H(+) antiporter that maintains K(+) homeostasis in guard cells and could regulate pH. Plays a critical role in osmoregulation through the control of stomates opening. This is Cation/H(+) antiporter 20 (CHX20) from Arabidopsis thaliana (Mouse-ear cress).